Here is a 612-residue protein sequence, read N- to C-terminus: Protein hinderin (612 aa).

Serine 20 is modified (phosphoserine). A coiled-coil region spans residues 90–166 (LKDLCLEDKR…CQELLSLYQK (77 aa)). The residue at position 178 (serine 178) is a Phosphoserine. Residues 362-406 (IEKQLSEDRRQQLMLQKMELEIEKERLQHLLAQQETKLLLKQQQL) are a coiled coil. The span at 462-477 (STSFKKCPDSPNSGQN) shows a compositional bias: polar residues. 2 disordered regions span residues 462–484 (STSF…KKTV) and 509–598 (ETVT…RSPE). Residues serine 471, serine 527, and serine 558 each carry the phosphoserine modification. Composition is skewed to polar residues over residues 555-568 (QSLS…SQPH) and 575-585 (TWSTLRPTPQK).

Interacts (via N- and C-terminal domains) with SMC3 (via central hinge region).

In terms of biological role, competes with SMC1 for binding to SMC3. May affect the availability of SMC3 to engage in the formation of multimeric protein complexes. The polypeptide is Protein hinderin (Kiaa1328) (Mus musculus (Mouse)).